A 309-amino-acid chain; its full sequence is Mycothiol acetyltransferase (309 aa).

N-acetyltransferase domains follow at residues 16 to 158 (ETLA…LDLP) and 166 to 309 (VSVR…RTET). Residue Glu47 coordinates 1D-myo-inositol 2-(L-cysteinylamino)-2-deoxy-alpha-D-glucopyranoside. Residue 92 to 94 (LVV) participates in acetyl-CoA binding. 1D-myo-inositol 2-(L-cysteinylamino)-2-deoxy-alpha-D-glucopyranoside is bound by residues Glu193, Lys232, and Glu241. Acetyl-CoA contacts are provided by residues 245–247 (LGI) and 252–258 (QGGGLGK). Position 279 (Tyr279) interacts with 1D-myo-inositol 2-(L-cysteinylamino)-2-deoxy-alpha-D-glucopyranoside.

It belongs to the acetyltransferase family. MshD subfamily. In terms of assembly, monomer.

The catalysed reaction is 1D-myo-inositol 2-(L-cysteinylamino)-2-deoxy-alpha-D-glucopyranoside + acetyl-CoA = mycothiol + CoA + H(+). In terms of biological role, catalyzes the transfer of acetyl from acetyl-CoA to desacetylmycothiol (Cys-GlcN-Ins) to form mycothiol. The chain is Mycothiol acetyltransferase from Streptomyces coelicolor (strain ATCC BAA-471 / A3(2) / M145).